The chain runs to 186 residues: MKTCNLTDRMKVKMIMLLFQILAISTLQSVSAYIPDRYIQENVAVRGKATQSDQLQGQWDAFSHASNAIDGNQDSYFYHGSCTHTSGGANPWWRVDLLQEYKITSVTITNRGDCCGERITGARIIIGKNNGLNNPECSTVGIMTAGETKTFRCSHPMIGRYVTVYLPKTEYLHLCEVEVNAMLPAN.

The signal sequence occupies residues methionine 1–alanine 32. Residues glutamine 40–asparagine 186 are F5/8 type C-like. The Ca(2+) site is built by asparagine 67, aspartate 70, asparagine 72, and serine 81. 3 disulfides stabilise this stretch: cysteine 82-cysteine 175, cysteine 114-cysteine 115, and cysteine 137-cysteine 153. Alpha-L-fucose-binding residues include histidine 84 and arginine 111. The Cell attachment site signature appears at arginine 111–aspartate 113. Position 118 (arginine 118) interacts with alpha-L-fucose. Residues cysteine 175 and glutamate 176 each coordinate Ca(2+).

It belongs to the fucolectin family. Homotrimer. As to expression, gill mucous cells.

The protein resides in the secreted. Its function is as follows. Acts as a defensive agent. Recognizes blood group fucosylated oligosaccharides including A, B, H and Lewis B-type antigens. Does not recognize Lewis A antigen and has low affinity for monovalent haptens. The sequence is that of Fucolectin-6 from Anguilla japonica (Japanese eel).